Consider the following 211-residue polypeptide: MYLDLTEKQVLILEFIKSQIILKGYPPAVREICTAVGLRSTSTVHSHLNKLEKLGYIRKDPTKPRAIEVLERSKVNDVSGANQEIIELPLVGQITAGEPILAQQNIEEYIPFPASLVKGSNNFVLRVKGESMINAGILDEDYVVVDKKNTALNSQIVVALINGESATVKRFFKEGNLIRLQPENDFMEPIMLNDSEVEIVGIVTGVFRVIK.

Residues Val29–Asn49 constitute a DNA-binding region (H-T-H motif). Active-site for autocatalytic cleavage activity residues include Ser131 and Lys169.

The protein belongs to the peptidase S24 family. Homodimer.

The catalysed reaction is Hydrolysis of Ala-|-Gly bond in repressor LexA.. Functionally, represses a number of genes involved in the response to DNA damage (SOS response), including recA and lexA. In the presence of single-stranded DNA, RecA interacts with LexA causing an autocatalytic cleavage which disrupts the DNA-binding part of LexA, leading to derepression of the SOS regulon and eventually DNA repair. The sequence is that of LexA repressor from Clostridioides difficile (strain 630) (Peptoclostridium difficile).